The chain runs to 330 residues: T-cell surface glycoprotein CD1b4 (330 aa).

The N-terminal stretch at 1-15 is a signal peptide; it reads MLLLALAFFFPAGDT. The Extracellular segment spans residues 16–299; it reads QNVLPGKISF…LYWGHSISIG (284 aa). 3 N-linked (GlcNAc...) asparagine glycosylation sites follow: asparagine 35, asparagine 72, and asparagine 143. 2 disulfide bridges follow: cysteine 117-cysteine 181 and cysteine 221-cysteine 276. The region spanning 182–292 is the Ig-like domain; that stretch reads PRYLMSVIEA…LEGQDIILYW (111 aa). A helical transmembrane segment spans residues 300–320; it reads WIILAVLVPCLIVLVLFILWF. Topologically, residues 321–330 are cytoplasmic; it reads YRRWSYEDIF. Positions 326–329 match the Internalization signal motif; the sequence is YEDI.

As to quaternary structure, heterodimer with B2M (beta-2-microglobulin). Interacts with saposin C.

It localises to the cell membrane. The protein resides in the endosome membrane. The protein localises to the lysosome membrane. Its function is as follows. Antigen-presenting protein that binds self and non-self lipid and glycolipid antigens and presents them to T-cell receptors on natural killer T-cells. The chain is T-cell surface glycoprotein CD1b4 (CD1B4) from Cavia porcellus (Guinea pig).